The primary structure comprises 412 residues: L-cysteine:1D-myo-inositol 2-amino-2-deoxy-alpha-D-glucopyranoside ligase (412 aa).

The disordered stretch occupies residues 1–30 (MQTWSSPSVPKLRGAPRPLRLHDTATGEVR). Cys43 lines the Zn(2+) pocket. Residues 43-46 (CGIT), Thr58, and 81-83 (NVT) contribute to the L-cysteinyl-5'-AMP site. Positions 45–55 (ITPYDATHLGH) match the 'HIGH' region motif. Positions 187–192 (ERGGDP) match the 'ERGGDP' region motif. Position 227 (Trp227) interacts with L-cysteinyl-5'-AMP. Residue Cys231 coordinates Zn(2+). An L-cysteinyl-5'-AMP-binding site is contributed by 249-251 (GSD). His256 contributes to the Zn(2+) binding site. An L-cysteinyl-5'-AMP-binding site is contributed by Ile283. The short motif at 289–293 (KMSKS) is the 'KMSKS' region element.

The protein belongs to the class-I aminoacyl-tRNA synthetase family. MshC subfamily. Monomer. Requires Zn(2+) as cofactor.

The enzyme catalyses 1D-myo-inositol 2-amino-2-deoxy-alpha-D-glucopyranoside + L-cysteine + ATP = 1D-myo-inositol 2-(L-cysteinylamino)-2-deoxy-alpha-D-glucopyranoside + AMP + diphosphate + H(+). Catalyzes the ATP-dependent condensation of GlcN-Ins and L-cysteine to form L-Cys-GlcN-Ins. The protein is L-cysteine:1D-myo-inositol 2-amino-2-deoxy-alpha-D-glucopyranoside ligase of Actinosynnema mirum (strain ATCC 29888 / DSM 43827 / JCM 3225 / NBRC 14064 / NCIMB 13271 / NRRL B-12336 / IMRU 3971 / 101).